Reading from the N-terminus, the 626-residue chain is DNA polymerase 2 (626 aa).

The protein belongs to the DNA polymerase type-B family.

The enzyme catalyses DNA(n) + a 2'-deoxyribonucleoside 5'-triphosphate = DNA(n+1) + diphosphate. In terms of biological role, this polymerase is devoid of exonuclease activity. The polypeptide is DNA polymerase 2 (dpo2) (Saccharolobus solfataricus (strain ATCC 35092 / DSM 1617 / JCM 11322 / P2) (Sulfolobus solfataricus)).